The primary structure comprises 827 residues: Periplasmic nitrate reductase (827 aa).

Positions 1–32 (MTLSRRAFIKQTAAATAASAAGVVLPGVDALA) form a signal peptide, tat-type signal. The region spanning 37-93 (LTWSKAPCRFCGTGCGVSVGVKNGKVVATQGDPQAEVNRGLNCVKGYFLSKIMYGQD) is the 4Fe-4S Mo/W bis-MGD-type domain. 4 residues coordinate [4Fe-4S] cluster: Cys44, Cys47, Cys51, and Cys79. Mo-bis(molybdopterin guanine dinucleotide)-binding positions include Lys81, Gln148, Asn173, Cys177, 241–245 (STFEH), 260–262 (QSD), Met371, Gln375, Asn481, 507–508 (SD), Lys530, Asp557, and 717–726 (TGRVLEHWHS). A substrate-binding site is contributed by Trp793. 2 residues coordinate Mo-bis(molybdopterin guanine dinucleotide): Asn801 and Lys818.

This sequence belongs to the prokaryotic molybdopterin-containing oxidoreductase family. NasA/NapA/NarB subfamily. Component of the periplasmic nitrate reductase NapAB complex composed of NapA and NapB. The cofactor is [4Fe-4S] cluster. Mo-bis(molybdopterin guanine dinucleotide) serves as cofactor. In terms of processing, predicted to be exported by the Tat system. The position of the signal peptide cleavage has not been experimentally proven.

Its subcellular location is the periplasm. The enzyme catalyses 2 Fe(II)-[cytochrome] + nitrate + 2 H(+) = 2 Fe(III)-[cytochrome] + nitrite + H2O. Its function is as follows. Catalytic subunit of the periplasmic nitrate reductase complex NapAB. Receives electrons from NapB and catalyzes the reduction of nitrate to nitrite. The protein is Periplasmic nitrate reductase of Paraburkholderia xenovorans (strain LB400).